A 451-amino-acid polypeptide reads, in one-letter code: MMSAPKITFIGAGSTIFVKNILGDVFHREALKTAHIALMDIDPTRLEESHIVVRKLMDSAGASGKITCHTQQKEALEDADFVVVAFQIGGYEPCTVTDFEVCKRHGLEQTIADTLGPGGIMRALRTIPHLWQICEDMTEVCPDATMLNYVNPMAMNTWAMYARYPHIKQVGLCHSVQGTAEELARDLNIDPATLRYRCAGINHMAFYLELERKTADGSYVNLYPELLAAYEAGQAPKPNIHGNTRCQNIVRYEMFKKLGYFVTESSEHFAEYTPWFIKPGREDLIERYKVPLDEYPKRCVEQLANWHKELEEYKKASRIDIKPSREYASTIMNAIWTGEPSVIYGNVRNDGLIDNLPQGCCVEVACLVDANGIQPTKVGTLPSHLAALMQTNINVQTLLTEAILTENRDRVYHAAMMDPHTAAVLGIDEIYALVDDLIAAHGDWLPGWLHR.

Residue 5-71 (PKITFIGAGS…ASGKITCHTQ (67 aa)) participates in NAD(+) binding. N151 is a binding site for substrate. C173 lines the Mn(2+) pocket. The Proton donor role is filled by H174. Position 203 (H203) interacts with Mn(2+). R287 contacts substrate.

Belongs to the glycosyl hydrolase 4 family. In terms of assembly, homodimer. NAD(+) serves as cofactor. It depends on Mn(2+) as a cofactor.

It carries out the reaction Hydrolysis of terminal, non-reducing alpha-D-galactose residues in alpha-D-galactosides, including galactose oligosaccharides, galactomannans and galactolipids.. This Escherichia coli (strain K12) protein is Alpha-galactosidase (melA).